The following is a 459-amino-acid chain: NADH oxidase (459 aa).

N10 is an FAD binding site. The active-site Proton acceptor is H11. Residues A12, D34, Q35, C44, V81, A110, S113, K143, and Y172 each coordinate FAD. C44 acts as the Redox-active in catalysis. C44 is subject to Cysteine sulfinic acid (-SO2H). I173, D192, Y201, and G256 together coordinate NAD(+). D294 provides a ligand contact to FAD. A310 is a binding site for NAD(+). FAD contacts are provided by L311, A312, and S313. G341 contacts NAD(+). F439 provides a ligand contact to FAD.

It belongs to the class-III pyridine nucleotide-disulfide oxidoreductase family. FAD is required as a cofactor.

The protein resides in the secreted. Its subcellular location is the cell wall. The enzyme catalyses 2 NADH + O2 + 2 H(+) = 2 NAD(+) + 2 H2O. In terms of biological role, catalyzes the four-electron reduction of molecular oxygen to water. Plays a role in redox balance maintenance. May be involved in mediating bacterial adhesion to host cells. May be considered a potential virulence factor. In Streptococcus pneumoniae serotype 4 (strain ATCC BAA-334 / TIGR4), this protein is NADH oxidase.